We begin with the raw amino-acid sequence, 398 residues long: 4-hydroxy-3-methylbut-2-enyl diphosphate reductase (398 aa).

A [4Fe-4S] cluster-binding site is contributed by Cys66. His96 contributes to the (2E)-4-hydroxy-3-methylbut-2-enyl diphosphate binding site. Residue His96 participates in dimethylallyl diphosphate binding. Isopentenyl diphosphate is bound at residue His96. Cys157 lines the [4Fe-4S] cluster pocket. His185 is a (2E)-4-hydroxy-3-methylbut-2-enyl diphosphate binding site. His185 contributes to the dimethylallyl diphosphate binding site. His185 is an isopentenyl diphosphate binding site. Glu187 serves as the catalytic Proton donor. Thr250 is a binding site for (2E)-4-hydroxy-3-methylbut-2-enyl diphosphate. Cys288 serves as a coordination point for [4Fe-4S] cluster. (2E)-4-hydroxy-3-methylbut-2-enyl diphosphate contacts are provided by Ser317, Ser318, Asn319, and Ser379. Dimethylallyl diphosphate contacts are provided by Ser317, Ser318, Asn319, and Ser379. Residues Ser317, Ser318, Asn319, and Ser379 each contribute to the isopentenyl diphosphate site.

This sequence belongs to the IspH family. [4Fe-4S] cluster is required as a cofactor.

The catalysed reaction is isopentenyl diphosphate + 2 oxidized [2Fe-2S]-[ferredoxin] + H2O = (2E)-4-hydroxy-3-methylbut-2-enyl diphosphate + 2 reduced [2Fe-2S]-[ferredoxin] + 2 H(+). It catalyses the reaction dimethylallyl diphosphate + 2 oxidized [2Fe-2S]-[ferredoxin] + H2O = (2E)-4-hydroxy-3-methylbut-2-enyl diphosphate + 2 reduced [2Fe-2S]-[ferredoxin] + 2 H(+). It participates in isoprenoid biosynthesis; dimethylallyl diphosphate biosynthesis; dimethylallyl diphosphate from (2E)-4-hydroxy-3-methylbutenyl diphosphate: step 1/1. Its pathway is isoprenoid biosynthesis; isopentenyl diphosphate biosynthesis via DXP pathway; isopentenyl diphosphate from 1-deoxy-D-xylulose 5-phosphate: step 6/6. Its function is as follows. Catalyzes the conversion of 1-hydroxy-2-methyl-2-(E)-butenyl 4-diphosphate (HMBPP) into a mixture of isopentenyl diphosphate (IPP) and dimethylallyl diphosphate (DMAPP). Acts in the terminal step of the DOXP/MEP pathway for isoprenoid precursor biosynthesis. This Synechococcus sp. (strain CC9311) protein is 4-hydroxy-3-methylbut-2-enyl diphosphate reductase.